The sequence spans 121 residues: uncharacterized protein (121 aa).

Disordered regions lie at residues 1–28 (MGCA…QNGD) and 60–81 (QENL…EIPG). Ser-95 and Ser-115 each carry phosphoserine.

This is an uncharacterized protein from Mus musculus (Mouse).